Here is a 2068-residue protein sequence, read N- to C-terminus: uncharacterized protein (2068 aa).

2 helical membrane passes run 3-23 (FFII…NFCS) and 51-71 (TIYL…YYYI). The segment covering 975-998 (QMHSGEDEKEELGEPKEKGSKSCQ) has biased composition (basic and acidic residues). Residues 975–1030 (QMHSGEDEKEELGEPKEKGSKSCQEEEEQDEEEEDEDEEEEEDQGVNNYDNYVDGV) are disordered. Acidic residues predominate over residues 999 to 1018 (EEEEQDEEEEDEDEEEEEDQ). The chain crosses the membrane as a helical span at residues 1890–1910 (FLYNLSFIYNVYNYLILIYIY).

It is found in the membrane. This is an uncharacterized protein from Plasmodium falciparum (isolate 3D7).